We begin with the raw amino-acid sequence, 834 residues long: Translation factor GUF1 homolog, mitochondrial (834 aa).

The transit peptide at 1 to 66 directs the protein to the mitochondrion; it reads MKLCGVRGSG…RPLLAEPRRY (66 aa). Residues 129–314 form the tr-type G domain; the sequence is ACIRNVSVVA…QIIDKVPPPR (186 aa). GTP-binding positions include 138–145, 205–209, and 259–262; these read AHVDHGKT, DTPGH, and TKMD. Positions 475–507 are disordered; sequence ATGPPETASRTKPATAAETASSDDASGSSGSSV. Residues 488-507 are compositionally biased toward low complexity; sequence ATAAETASSDDASGSSGSSV.

The protein belongs to the TRAFAC class translation factor GTPase superfamily. Classic translation factor GTPase family. LepA subfamily.

It localises to the mitochondrion inner membrane. It catalyses the reaction GTP + H2O = GDP + phosphate + H(+). In terms of biological role, promotes mitochondrial protein synthesis. May act as a fidelity factor of the translation reaction, by catalyzing a one-codon backward translocation of tRNAs on improperly translocated ribosomes. Binds to mitochondrial ribosomes in a GTP-dependent manner. This Leishmania major protein is Translation factor GUF1 homolog, mitochondrial.